Reading from the N-terminus, the 867-residue chain is Cadherin-related family member 1 (867 aa).

The first 21 residues, 1-21, serve as a signal peptide directing secretion; sequence MGRGPPAVLAPWMLFLSLAQA. Residues 22–701 lie on the Extracellular side of the membrane; the sequence is NFAPHFFDNG…LMQTKDNPMK (680 aa). 6 consecutive Cadherin domains span residues 36 to 135, 136 to 247, 248 to 354, 360 to 473, 474 to 577, and 574 to 689; these read NGNM…APRF, IQEP…GPVF, VGTP…PPTF, PQNR…VPKF, TSHY…YPQF, and YPQF…SPMA. Residues N58 and N89 are each glycosylated (N-linked (GlcNAc...) asparagine). N-linked (GlcNAc...) asparagine glycosylation is found at N288 and N297. A helical membrane pass occupies residues 702–722; sequence AVGVLAGIMAIIVAITVLIST. Over 723-867 the chain is Cytoplasmic; it reads ATFWRNKKSN…KKNLHSKAYF (145 aa). Positions 767 to 843 are disordered; the sequence is KFVLREAPPN…VAKRKAVGSP (77 aa). Polar residues predominate over residues 777–786; the sequence is ENCNNNSRGS. A compositionally biased stretch (pro residues) spans 790-802; the sequence is PQAPAPPPPPSPA.

In terms of assembly, interacts with PROM1. Post-translationally, undergoes proteolytic cleavage; produces a soluble 95 kDa N-terminal fragment and a 25 kDa cell-associated C-terminal fragment. In terms of tissue distribution, expressed in photoreceptor cells of the outer nuclear layer of the retina.

It localises to the cell membrane. In terms of biological role, potential calcium-dependent cell-adhesion protein. May be required for the structural integrity of the outer segment (OS) of photoreceptor cells. This chain is Cadherin-related family member 1 (CDHR1), found in Bos taurus (Bovine).